Here is a 314-residue protein sequence, read N- to C-terminus: tRNA uridine(34) hydroxylase (314 aa).

The region spanning 140-234 (ARDDVILIDT…YLEETPPDES (95 aa)) is the Rhodanese domain. C194 serves as the catalytic Cysteine persulfide intermediate.

It belongs to the TrhO family.

The enzyme catalyses uridine(34) in tRNA + AH2 + O2 = 5-hydroxyuridine(34) in tRNA + A + H2O. Its function is as follows. Catalyzes oxygen-dependent 5-hydroxyuridine (ho5U) modification at position 34 in tRNAs. The polypeptide is tRNA uridine(34) hydroxylase (Acinetobacter baumannii (strain SDF)).